A 342-amino-acid polypeptide reads, in one-letter code: tRNA N6-adenosine threonylcarbamoyltransferase (342 aa).

Positions 111 and 115 each coordinate Fe cation. Residues 134–138 (LVSGG), Asp-167, Gly-180, and Asn-275 each bind substrate. A Fe cation-binding site is contributed by Asp-303.

Belongs to the KAE1 / TsaD family. It depends on Fe(2+) as a cofactor.

The protein resides in the cytoplasm. The enzyme catalyses L-threonylcarbamoyladenylate + adenosine(37) in tRNA = N(6)-L-threonylcarbamoyladenosine(37) in tRNA + AMP + H(+). Functionally, required for the formation of a threonylcarbamoyl group on adenosine at position 37 (t(6)A37) in tRNAs that read codons beginning with adenine. Is involved in the transfer of the threonylcarbamoyl moiety of threonylcarbamoyl-AMP (TC-AMP) to the N6 group of A37, together with TsaE and TsaB. TsaD likely plays a direct catalytic role in this reaction. The chain is tRNA N6-adenosine threonylcarbamoyltransferase from Paraburkholderia xenovorans (strain LB400).